The primary structure comprises 1337 residues: DNA mismatch repair protein Msh6 (1337 aa).

A PWWP domain is found at 68-130; the sequence is PGDLVWAKME…IKYLRPYKGS (63 aa). The segment at 170–310 is disordered; the sequence is AVCSEPSDTE…SEAPKRAAPV (141 aa). Residues 176-187 are compositionally biased toward acidic residues; that stretch reads SDTEEAEEEEME. Positions 226–248 are enriched in basic and acidic residues; the sequence is VLDSDSDRDGSDVEFKPDVKEAS. Over residues 257–272 the composition is skewed to acidic residues; the sequence is DENEATDVETDEESIE. A compositionally biased stretch (basic residues) spans 279–292; the sequence is PSKRKRGNVSKPSK. Over residues 294-305 the composition is skewed to basic and acidic residues; it reads SSLENEHSEAPK. 1111–1118 lines the ATP pocket; it reads GPNMGGKS.

This sequence belongs to the DNA mismatch repair MutS family.

Its subcellular location is the nucleus. Its function is as follows. Component of the post-replicative DNA mismatch repair system (MMR). Involved in B cell growth by positively regulating B cell proliferation and controlling replication efficiency. Controls cell cycle to prevent re-replication and defects in DNA damage-induced G2 checkpoint. Doesn't seem to counteract or control the immunoglobulin gene conversion (Ig GC) and to contribute to guanine/uracil mismatch repair. This chain is DNA mismatch repair protein Msh6, found in Gallus gallus (Chicken).